We begin with the raw amino-acid sequence, 312 residues long: Olfactory receptor-like protein COR4 (312 aa).

Topologically, residues Met1–Pro26 are extracellular. The N-linked (GlcNAc...) asparagine glycan is linked to Asn5. Residues Leu27 to Ile49 traverse the membrane as a helical segment. The Cytoplasmic portion of the chain corresponds to Ser50 to Thr57. Residues Pro58–Pro79 form a helical membrane-spanning segment. The Extracellular portion of the chain corresponds to Lys80 to Gln100. Cysteines 97 and 179 form a disulfide. The chain crosses the membrane as a helical span at residues Tyr101–Tyr120. Topologically, residues Asp121–Ala139 are cytoplasmic. A helical membrane pass occupies residues Val140–Leu164. Topologically, residues Lys165–Leu205 are extracellular. Residues Phe206–Val226 traverse the membrane as a helical segment. Residues Arg227–Ser239 are Cytoplasmic-facing. A helical transmembrane segment spans residues Thr240–Leu260. Residues Arg261 to Asp271 lie on the Extracellular side of the membrane. Residues Lys272–Trp292 traverse the membrane as a helical segment. At Arg293 to His312 the chain is on the cytoplasmic side.

It belongs to the G-protein coupled receptor 1 family.

The protein resides in the cell membrane. Functionally, odorant receptor. The polypeptide is Olfactory receptor-like protein COR4 (COR4) (Gallus gallus (Chicken)).